The chain runs to 246 residues: Phosphonates import ATP-binding protein PhnC (246 aa).

One can recognise an ABC transporter domain in the interval 2–246 (IKFENVSKIY…ILDEVYRKEA (245 aa)). 35–42 (GTSGAGKS) contacts ATP.

The protein belongs to the ABC transporter superfamily. Phosphonates importer (TC 3.A.1.9.1) family. The complex is composed of two ATP-binding proteins (PhnC), two transmembrane proteins (PhnE) and a solute-binding protein (PhnD).

The protein localises to the cell membrane. The enzyme catalyses phosphonate(out) + ATP + H2O = phosphonate(in) + ADP + phosphate + H(+). In terms of biological role, part of the ABC transporter complex PhnCDE involved in phosphonates import. Responsible for energy coupling to the transport system. In Lactococcus lactis subsp. lactis (strain IL1403) (Streptococcus lactis), this protein is Phosphonates import ATP-binding protein PhnC.